The chain runs to 335 residues: Holliday junction branch migration complex subunit RuvB (335 aa).

The tract at residues methionine 1 to tyrosine 183 is large ATPase domain (RuvB-L). Residues leucine 22, arginine 23, glycine 64, lysine 67, threonine 68, threonine 69, glutamate 130–tyrosine 132, arginine 173, tyrosine 183, and arginine 220 contribute to the ATP site. Threonine 68 provides a ligand contact to Mg(2+). The interval threonine 184–glutamine 254 is small ATPAse domain (RuvB-S). The interval proline 257–valine 335 is head domain (RuvB-H). DNA-binding residues include arginine 293, arginine 312, and arginine 317.

This sequence belongs to the RuvB family. As to quaternary structure, homohexamer. Forms an RuvA(8)-RuvB(12)-Holliday junction (HJ) complex. HJ DNA is sandwiched between 2 RuvA tetramers; dsDNA enters through RuvA and exits via RuvB. An RuvB hexamer assembles on each DNA strand where it exits the tetramer. Each RuvB hexamer is contacted by two RuvA subunits (via domain III) on 2 adjacent RuvB subunits; this complex drives branch migration. In the full resolvosome a probable DNA-RuvA(4)-RuvB(12)-RuvC(2) complex forms which resolves the HJ.

The protein resides in the cytoplasm. The catalysed reaction is ATP + H2O = ADP + phosphate + H(+). The RuvA-RuvB-RuvC complex processes Holliday junction (HJ) DNA during genetic recombination and DNA repair, while the RuvA-RuvB complex plays an important role in the rescue of blocked DNA replication forks via replication fork reversal (RFR). RuvA specifically binds to HJ cruciform DNA, conferring on it an open structure. The RuvB hexamer acts as an ATP-dependent pump, pulling dsDNA into and through the RuvAB complex. RuvB forms 2 homohexamers on either side of HJ DNA bound by 1 or 2 RuvA tetramers; 4 subunits per hexamer contact DNA at a time. Coordinated motions by a converter formed by DNA-disengaged RuvB subunits stimulates ATP hydrolysis and nucleotide exchange. Immobilization of the converter enables RuvB to convert the ATP-contained energy into a lever motion, pulling 2 nucleotides of DNA out of the RuvA tetramer per ATP hydrolyzed, thus driving DNA branch migration. The RuvB motors rotate together with the DNA substrate, which together with the progressing nucleotide cycle form the mechanistic basis for DNA recombination by continuous HJ branch migration. Branch migration allows RuvC to scan DNA until it finds its consensus sequence, where it cleaves and resolves cruciform DNA. In Listeria welshimeri serovar 6b (strain ATCC 35897 / DSM 20650 / CCUG 15529 / CIP 8149 / NCTC 11857 / SLCC 5334 / V8), this protein is Holliday junction branch migration complex subunit RuvB.